We begin with the raw amino-acid sequence, 288 residues long: Cyclin-dependent kinase 2 homolog (288 aa).

The Protein kinase domain occupies 4–284; that stretch reads YHGLEKIGEG…AKEALQHAYF (281 aa). Residues 10–18 and Lys-32 each bind ATP; that span reads IGEGTYGVV. Thr-14 bears the Phosphothreonine mark. A Phosphotyrosine modification is found at Tyr-15. Asp-125 (proton acceptor) is an active-site residue. Phosphothreonine is present on Thr-158.

The protein belongs to the protein kinase superfamily. CMGC Ser/Thr protein kinase family. CDC2/CDKX subfamily. In terms of assembly, may form a complex composed of at least the catalytic subunit CRK2 and a cyclin. The cofactor is Mg(2+).

Its subcellular location is the cytoplasm. The enzyme catalyses L-seryl-[protein] + ATP = O-phospho-L-seryl-[protein] + ADP + H(+). It catalyses the reaction L-threonyl-[protein] + ATP = O-phospho-L-threonyl-[protein] + ADP + H(+). The catalysed reaction is [DNA-directed RNA polymerase] + ATP = phospho-[DNA-directed RNA polymerase] + ADP + H(+). Its activity is regulated as follows. Phosphorylation at Thr-14 or Tyr-15 inactivates the enzyme, while phosphorylation at Thr-158 activates it. Functionally, serine/threonine-protein kinase. Involved in the control of the cell cycle. Required for entry into S-phase and mitosis. Probable component of the kinase complex that phosphorylates the repetitive C-terminus of RNA polymerase II. The chain is Cyclin-dependent kinase 2 homolog from Plasmodium knowlesi (strain H).